The sequence spans 107 residues: U1-lycotoxin-Ls1e (107 aa).

The first 20 residues, 1–20 (MMKVLVVFALLVTLISYSSS), serve as a signal peptide directing secretion. The propeptide occupies 21 to 41 (EGIDDLEADELLSLMANEQTR). 4 disulfide bridges follow: Cys-44–Cys-59, Cys-51–Cys-68, Cys-58–Cys-86, and Cys-70–Cys-84.

The protein belongs to the neurotoxin 19 (CSTX) family. 04 (U1-Lctx) subfamily. Expressed by the venom gland.

Its subcellular location is the secreted. The chain is U1-lycotoxin-Ls1e from Lycosa singoriensis (Wolf spider).